Consider the following 270-residue polypeptide: 2-heptyl-3-hydroxy-4-quinolone dioxygenase AqdC2 (270 aa).

In terms of domain architecture, AB hydrolase-1 spans 25 to 156 (PALVLLTGWG…KSARAGLAKS (132 aa)). Residue His-99 coordinates substrate. His-248 (proton donor/acceptor) is an active-site residue.

This sequence belongs to the AB hydrolase superfamily.

It catalyses the reaction 2-heptyl-3-hydroxy-4(1H)-quinolone + O2 = N-octanoylanthranilate + CO + H(+). Its function is as follows. Involved in the degradation of the Pseudomonas aeruginosa quorum sensing signal molecules HHQ (2-heptyl-4-quinolone) and PQS (2-heptyl-3-hydroxy-4-quinolone) to anthranilic acid. Catalyzes the cleavage of PQS to form N-octanoylanthranilic acid and carbon monoxide. The chain is 2-heptyl-3-hydroxy-4-quinolone dioxygenase AqdC2 from Rhodococcus erythropolis (Arthrobacter picolinophilus).